Reading from the N-terminus, the 62-residue chain is Beta-defensin 33 (62 aa).

An N-terminal signal peptide occupies residues 1-20; the sequence is MRLLFLLFILLVCLAQTTSG. 3 disulfide bridges follow: Cys-30-Cys-59, Cys-37-Cys-52, and Cys-45-Cys-60.

Belongs to the beta-defensin family.

The protein localises to the secreted. Functionally, has antibacterial activity. The chain is Beta-defensin 33 (Defb33) from Mus musculus (Mouse).